We begin with the raw amino-acid sequence, 55 residues long: ATP synthase F(0) complex subunit 8 (55 aa).

A helical membrane pass occupies residues 4-24 (LNPAPWFAILVFSWLVFLTVI). The disordered stretch occupies residues 34–55 (TNEPTSQSTEKAKPEPWNWPWH).

Belongs to the ATPase protein 8 family. In terms of assembly, component of the ATP synthase complex composed at least of ATP5F1A/subunit alpha, ATP5F1B/subunit beta, ATP5MC1/subunit c (homooctomer), MT-ATP6/subunit a, MT-ATP8/subunit 8, ATP5ME/subunit e, ATP5MF/subunit f, ATP5MG/subunit g, ATP5MK/subunit k, ATP5MJ/subunit j, ATP5F1C/subunit gamma, ATP5F1D/subunit delta, ATP5F1E/subunit epsilon, ATP5PF/subunit F6, ATP5PB/subunit b, ATP5PD/subunit d, ATP5PO/subunit OSCP. ATP synthase complex consists of a soluble F(1) head domain (subunits alpha(3) and beta(3)) - the catalytic core - and a membrane F(0) domain - the membrane proton channel (subunits c, a, 8, e, f, g, k and j). These two domains are linked by a central stalk (subunits gamma, delta, and epsilon) rotating inside the F1 region and a stationary peripheral stalk (subunits F6, b, d, and OSCP).

It is found in the mitochondrion membrane. In terms of biological role, subunit 8, of the mitochondrial membrane ATP synthase complex (F(1)F(0) ATP synthase or Complex V) that produces ATP from ADP in the presence of a proton gradient across the membrane which is generated by electron transport complexes of the respiratory chain. ATP synthase complex consist of a soluble F(1) head domain - the catalytic core - and a membrane F(1) domain - the membrane proton channel. These two domains are linked by a central stalk rotating inside the F(1) region and a stationary peripheral stalk. During catalysis, ATP synthesis in the catalytic domain of F(1) is coupled via a rotary mechanism of the central stalk subunits to proton translocation. In vivo, can only synthesize ATP although its ATP hydrolase activity can be activated artificially in vitro. Part of the complex F(0) domain. The chain is ATP synthase F(0) complex subunit 8 from Oncorhynchus mykiss (Rainbow trout).